The sequence spans 285 residues: Bifunctional protein FolD (285 aa).

NADP(+)-binding positions include 166 to 168 and Ile-232; that span reads GAS.

It belongs to the tetrahydrofolate dehydrogenase/cyclohydrolase family. As to quaternary structure, homodimer.

The enzyme catalyses (6R)-5,10-methylene-5,6,7,8-tetrahydrofolate + NADP(+) = (6R)-5,10-methenyltetrahydrofolate + NADPH. The catalysed reaction is (6R)-5,10-methenyltetrahydrofolate + H2O = (6R)-10-formyltetrahydrofolate + H(+). It functions in the pathway one-carbon metabolism; tetrahydrofolate interconversion. Functionally, catalyzes the oxidation of 5,10-methylenetetrahydrofolate to 5,10-methenyltetrahydrofolate and then the hydrolysis of 5,10-methenyltetrahydrofolate to 10-formyltetrahydrofolate. In Baumannia cicadellinicola subsp. Homalodisca coagulata, this protein is Bifunctional protein FolD.